A 405-amino-acid chain; its full sequence is Splicing factor 45 (405 aa).

Ser-2 carries the post-translational modification N-acetylserine. At Ser-2 the chain carries Phosphoserine. Lys-15 is covalently cross-linked (Glycyl lysine isopeptide (Lys-Gly) (interchain with G-Cter in SUMO2)). Lys-21 is subject to N6-acetyllysine. Glycyl lysine isopeptide (Lys-Gly) (interchain with G-Cter in SUMO2) cross-links involve residues Lys-24 and Lys-33. Lys-41 is subject to N6-acetyllysine; alternate. A Glycyl lysine isopeptide (Lys-Gly) (interchain with G-Cter in SUMO2); alternate cross-link involves residue Lys-41. Positions 57-68 are enriched in basic and acidic residues; that stretch reads LKRGGSSDDRQI. Disordered stretches follow at residues 57–88 and 114–233; these read LKRG…SGFS and RQRE…FLAN. Lys-58 participates in a covalent cross-link: Glycyl lysine isopeptide (Lys-Gly) (interchain with G-Cter in SUMO2). The residue at position 71 (Thr-71) is a Phosphothreonine. Residues 114-153 are compositionally biased toward basic and acidic residues; that stretch reads RQREERQRQRELERQKEIEEREKRRKDRHEASGFSRRPDP. Phosphoserine is present on residues Ser-155 and Ser-169. Over residues 182–200 the composition is skewed to basic and acidic residues; it reads VEKDKELPRDFPYEEDSRP. Ser-222 is subject to Phosphoserine. The 49-residue stretch at 235–283 folds into the G-patch domain; it reads GGTVAHKIMQKYGFREGQGLGKHEQGLSTALSVEKTSKRGGKIIVGDAT. Thr-237 is subject to Phosphothreonine. Lys-256 is covalently cross-linked (Glycyl lysine isopeptide (Lys-Gly) (interchain with G-Cter in SUMO2)). Ser-266 carries the phosphoserine modification. Lys-276 is covalently cross-linked (Glycyl lysine isopeptide (Lys-Gly) (interchain with G-Cter in SUMO2)). Phosphoserine is present on residues Ser-295 and Ser-297. Residues 310–389 enclose the RRM domain; that stretch reads VVLLRNMVGA…YFGGRVVKAC (80 aa).

As to quaternary structure, binds SXL. Associates with the spliceosome. Interacts with SF3B1, SF1 and U2AF2.

It is found in the nucleus. In terms of biological role, splice factor that binds to the single-stranded 3'AG at the exon/intron border and promotes its utilization in the second catalytic step. Involved in the regulation of alternative splicing and the utilization of cryptic splice sites. The chain is Splicing factor 45 (Rbm17) from Mus musculus (Mouse).